The primary structure comprises 1857 residues: Ankyrin repeat domain-containing protein 31 (1857 aa).

Disordered regions lie at residues 1–30 (MENG…EDEE) and 195–215 (SEPG…DEES). Positions 195 to 207 (SEPGEEVTQTMTS) are enriched in polar residues. ANK repeat units lie at residues 475–504 (FGEN…NVNQ), 508–537 (DGWT…DVNV), and 541–570 (YQIT…DPLF). The span at 676-691 (KFGKSNLNSVKNSRTN) shows a compositional bias: polar residues. Disordered stretches follow at residues 676 to 711 (KFGK…VDDR), 813 to 844 (VTTH…KGKA), 995 to 1038 (RDSS…TVVH), 1046 to 1065 (KAEK…NTDF), and 1075 to 1137 (ANSS…QNFR). Over residues 692-704 (VSKRKGQKNRQQK) the composition is skewed to basic residues. Residues 814–839 (TTHQQPHTNQEQYSSPYKSLGNNSSN) show a composition bias toward polar residues. Positions 1008-1019 (SLERKQDTDKNY) are enriched in basic and acidic residues. The span at 1023-1032 (GPNTSSSSRP) shows a compositional bias: polar residues. Residues 1082–1136 (QRKEKENVRKSDAELTHNDSEAERTLKSCEEKKKNMDSETHSPCDIQEHRKDQNF) are compositionally biased toward basic and acidic residues. ANK repeat units lie at residues 1162-1191 (KGES…DVNL), 1195-1224 (AGWT…NVNC), and 1228-1257 (DGIV…NPNQ). Disordered stretches follow at residues 1457–1479 (NSDI…AHAQ), 1540–1570 (GGLL…AENS), 1609–1640 (DPHS…AEPL), and 1663–1697 (AAAA…TTPR). The span at 1555-1570 (ASSSQPAALTPHAENS) shows a compositional bias: polar residues. A compositionally biased stretch (low complexity) spans 1663 to 1683 (AAAASHTDSTQSSLSSASAHQ). The RAMA domain maps to 1687–1782 (KTVPHRNTTP…TYLGRELVKC (96 aa)).

In terms of assembly, interacts with REC114; the interaction is direct. Interacts with IHO1. In terms of tissue distribution, present in meiotic cells (at protein level).

The protein localises to the nucleus. It is found in the chromosome. In terms of biological role, required for DNA double-strand breaks (DSBs) formation during meiotic recombination. Regulates the spatial and temporal patterns of pre-DSB recombinosome assembly and recombination activity by acting as a scaffold that anchors REC114 and other factors to specific genomic locations, thereby regulating DSB formation. Plays a key role in recombination in the pseudoautosomal regions of sex chromosomes. This chain is Ankyrin repeat domain-containing protein 31, found in Mus musculus (Mouse).